A 315-amino-acid chain; its full sequence is tRNA dimethylallyltransferase (315 aa).

13–20 is an ATP binding site; sequence GPTASGKS. 15-20 lines the substrate pocket; it reads TASGKS. Interaction with substrate tRNA stretches follow at residues 38–41 and 162–166; these read DSMQ and QRLAR.

The protein belongs to the IPP transferase family. As to quaternary structure, monomer. Mg(2+) is required as a cofactor.

The enzyme catalyses adenosine(37) in tRNA + dimethylallyl diphosphate = N(6)-dimethylallyladenosine(37) in tRNA + diphosphate. Catalyzes the transfer of a dimethylallyl group onto the adenine at position 37 in tRNAs that read codons beginning with uridine, leading to the formation of N6-(dimethylallyl)adenosine (i(6)A). The chain is tRNA dimethylallyltransferase from Paramagnetospirillum magneticum (strain ATCC 700264 / AMB-1) (Magnetospirillum magneticum).